Here is a 377-residue protein sequence, read N- to C-terminus: Peroxisomal membrane protein PEX14 (377 aa).

A compositionally biased stretch (low complexity) spans 1–20; the sequence is MASSEQAEQPSQPSSSPGSE. Positions 1–23 are disordered; that stretch reads MASSEQAEQPSQPSSSPGSENVV. N-acetylalanine is present on alanine 2. Topologically, residues 2–108 are peroxisomal; the sequence is ASSEQAEQPS…CSPGSSRWRD (107 aa). Lysine 34 is subject to N6-acetyllysine. A helical membrane pass occupies residues 109–126; it reads YGALAIIMAGIAFGFHQL. Residues 127–377 are Cytoplasmic-facing; it reads YKKYLLPLIL…EGASNESERH (251 aa). The disordered stretch occupies residues 230 to 377; sequence PPSPSAPKIP…EGASNESERH (148 aa). Phosphoserine is present on serine 232. Composition is skewed to low complexity over residues 244–259 and 265–275; these read PVKS…VNHH and SPVSNESTSSS. A phosphoserine mark is found at serine 282 and serine 335. Residues 323–342 are compositionally biased toward acidic residues; the sequence is KEEEEEEEEEDVSHVDEEDV. Over residues 360–377 the composition is skewed to basic and acidic residues; the sequence is QVDKLRRPEGASNESERH.

Belongs to the peroxin-14 family. As to quaternary structure, interacts with PEX13; forming the PEX13-PEX14 docking complex. Interacts with PEX5 (via WxxxF/Y motifs). Interacts with PEX19. Interacts with tubulin.

It is found in the peroxisome membrane. Its function is as follows. Component of the PEX13-PEX14 docking complex, a translocon channel that specifically mediates the import of peroxisomal cargo proteins bound to PEX5 receptor. The PEX13-PEX14 docking complex forms a large import pore which can be opened to a diameter of about 9 nm. Mechanistically, PEX5 receptor along with cargo proteins associates with the PEX14 subunit of the PEX13-PEX14 docking complex in the cytosol, leading to the insertion of the receptor into the organelle membrane with the concomitant translocation of the cargo into the peroxisome matrix. Plays a key role for peroxisome movement through a direct interaction with tubulin. This chain is Peroxisomal membrane protein PEX14, found in Cricetulus longicaudatus (Long-tailed dwarf hamster).